A 598-amino-acid chain; its full sequence is Elongation factor 4 (598 aa).

In terms of domain architecture, tr-type G spans 2 to 184; it reads DNVRNFAIIA…AIITKLPAPQ (183 aa). Residues 14–19 and 131–134 contribute to the GTP site; these read DHGKST and NKVD.

Belongs to the TRAFAC class translation factor GTPase superfamily. Classic translation factor GTPase family. LepA subfamily.

Its subcellular location is the cell membrane. It carries out the reaction GTP + H2O = GDP + phosphate + H(+). Functionally, required for accurate and efficient protein synthesis under certain stress conditions. May act as a fidelity factor of the translation reaction, by catalyzing a one-codon backward translocation of tRNAs on improperly translocated ribosomes. Back-translocation proceeds from a post-translocation (POST) complex to a pre-translocation (PRE) complex, thus giving elongation factor G a second chance to translocate the tRNAs correctly. Binds to ribosomes in a GTP-dependent manner. In Wolbachia sp. subsp. Brugia malayi (strain TRS), this protein is Elongation factor 4.